Consider the following 274-residue polypeptide: Undecaprenyl-diphosphatase (274 aa).

Helical transmembrane passes span 4-24 (PLFV…FLPI), 41-61 (DATS…AVCW), 83-103 (FVGL…MFHS), 108-128 (LLFN…LILW), 184-204 (AAEF…VYDL), 218-238 (VFAI…KAFI), and 246-266 (FIAF…TWQL).

This sequence belongs to the UppP family.

Its subcellular location is the cell inner membrane. It catalyses the reaction di-trans,octa-cis-undecaprenyl diphosphate + H2O = di-trans,octa-cis-undecaprenyl phosphate + phosphate + H(+). Functionally, catalyzes the dephosphorylation of undecaprenyl diphosphate (UPP). Confers resistance to bacitracin. The sequence is that of Undecaprenyl-diphosphatase from Aromatoleum aromaticum (strain DSM 19018 / LMG 30748 / EbN1) (Azoarcus sp. (strain EbN1)).